Consider the following 356-residue polypeptide: uncharacterized protein (356 aa).

Residues Ile-8–Ser-28 traverse the membrane as a helical segment.

To C.elegans C41C4.1 and C18B2.1.

It localises to the membrane. This is an uncharacterized protein from Caenorhabditis elegans.